The primary structure comprises 482 residues: tRNA sulfurtransferase (482 aa).

The 105-residue stretch at 61 to 165 folds into the THUMP domain; the sequence is QQVLEILTTT…DDKLNQILAH (105 aa). ATP contacts are provided by residues 183–184, lysine 265, glycine 287, and glutamine 296; that span reads LI. Cysteine 344 and cysteine 456 are joined by a disulfide. The 79-residue stretch at 404-482 folds into the Rhodanese domain; it reads IEEHAVVLDI…GFNNVKVYRP (79 aa). Cysteine 456 functions as the Cysteine persulfide intermediate in the catalytic mechanism.

This sequence belongs to the ThiI family.

Its subcellular location is the cytoplasm. It catalyses the reaction [ThiI sulfur-carrier protein]-S-sulfanyl-L-cysteine + a uridine in tRNA + 2 reduced [2Fe-2S]-[ferredoxin] + ATP + H(+) = [ThiI sulfur-carrier protein]-L-cysteine + a 4-thiouridine in tRNA + 2 oxidized [2Fe-2S]-[ferredoxin] + AMP + diphosphate. It carries out the reaction [ThiS sulfur-carrier protein]-C-terminal Gly-Gly-AMP + S-sulfanyl-L-cysteinyl-[cysteine desulfurase] + AH2 = [ThiS sulfur-carrier protein]-C-terminal-Gly-aminoethanethioate + L-cysteinyl-[cysteine desulfurase] + A + AMP + 2 H(+). The protein operates within cofactor biosynthesis; thiamine diphosphate biosynthesis. Catalyzes the ATP-dependent transfer of a sulfur to tRNA to produce 4-thiouridine in position 8 of tRNAs, which functions as a near-UV photosensor. Also catalyzes the transfer of sulfur to the sulfur carrier protein ThiS, forming ThiS-thiocarboxylate. This is a step in the synthesis of thiazole, in the thiamine biosynthesis pathway. The sulfur is donated as persulfide by IscS. This chain is tRNA sulfurtransferase, found in Vibrio vulnificus (strain YJ016).